A 352-amino-acid polypeptide reads, in one-letter code: MDYQVSSPTYDIDYYTSEPCQKINVKQIAARLLPPLYSLVFIFGFVGNILVVLILINCKRLKSMTDIYLLNLAISDLLFLLTVPFWAHYAAAQWDFGNTMCQLLTGLYFIGFFSGIFFIILLTIDRYLAIVHAVFALKARTVTFGVVTSVITWVVAVFASLPGIIFTRSQREGLHYTCSSHFPYSQYQFWKNFQTLKIVILGLVLPLLVMVICYSGILKTLLRCRNEKKRHRAVRLIFTIMIVYFLFWAPYNIVLLLNTFQEFFGLNNCSSSNRLDQAMQVTETLGMTHCCINPIIYAFVGEKFRNYLLVFFQKHIAKRFCKCCSIFQQEASERASSVYTRSTGEQEISVGL.

The Extracellular portion of the chain corresponds to 1-30; sequence MDYQVSSPTYDIDYYTSEPCQKINVKQIAA. Y3 carries the sulfotyrosine modification. O-linked (GalNAc...) serine glycosylation is found at S6 and S7. Sulfotyrosine occurs at positions 10, 14, and 15. 2 disulfide bridges follow: C20–C269 and C101–C178. The helical transmembrane segment at 31–58 threads the bilayer; the sequence is RLLPPLYSLVFIFGFVGNILVVLILINC. The Cytoplasmic portion of the chain corresponds to 59-68; sequence KRLKSMTDIY. The chain crosses the membrane as a helical span at residues 69 to 89; that stretch reads LLNLAISDLLFLLTVPFWAHY. At 90 to 102 the chain is on the extracellular side; that stretch reads AAAQWDFGNTMCQ. The helical transmembrane segment at 103 to 124 threads the bilayer; that stretch reads LLTGLYFIGFFSGIFFIILLTI. Over 125 to 141 the chain is Cytoplasmic; sequence DRYLAIVHAVFALKART. A helical transmembrane segment spans residues 142-166; that stretch reads VTFGVVTSVITWVVAVFASLPGIIF. Over 167–198 the chain is Extracellular; that stretch reads TRSQREGLHYTCSSHFPYSQYQFWKNFQTLKI. The chain crosses the membrane as a helical span at residues 199-218; it reads VILGLVLPLLVMVICYSGIL. Residues 219–235 are Cytoplasmic-facing; it reads KTLLRCRNEKKRHRAVR. The chain crosses the membrane as a helical span at residues 236 to 260; sequence LIFTIMIVYFLFWAPYNIVLLLNTF. The Extracellular portion of the chain corresponds to 261 to 277; that stretch reads QEFFGLNNCSSSNRLDQ. The helical transmembrane segment at 278 to 301 threads the bilayer; that stretch reads AMQVTETLGMTHCCINPIIYAFVG. The Cytoplasmic segment spans residues 302 to 352; it reads EKFRNYLLVFFQKHIAKRFCKCCSIFQQEASERASSVYTRSTGEQEISVGL. 3 S-palmitoyl cysteine lipidation sites follow: C321, C323, and C324. Residues S336, S337, S342, and S349 each carry the phosphoserine; by BARK1 modification.

The protein belongs to the G-protein coupled receptor 1 family. Interacts with PRAF2. Efficient ligand binding to CCL3/MIP-1alpha and CCL4/MIP-1beta requires sulfation, O-glycosylation and sialic acid modifications. Glycosylation on Ser-6 is required for efficient binding of CCL4. Interacts with GRK2. Interacts with ARRB1 and ARRB2. Interacts with CNIH4. Interacts with S100A4; this interaction stimulates T-lymphocyte chemotaxis. Post-translationally, sulfated on at least 2 of the N-terminal tyrosines. Sulfation is required for efficient binding of the chemokines, CCL3 and CCL4. In terms of processing, palmitoylation in the C-terminal is important for cell surface expression. Phosphorylation on serine residues in the C-terminal is stimulated by binding CC chemokines especially by APO-RANTES. Post-translationally, O-glycosylated, but not N-glycosylated. Ser-6 appears to be the major site even if Ser-7 may be also O-glycosylated. Also sialylated glycans present which contribute to chemokine binding. Thr-16 and Ser-17 may also be glycosylated and, if so, with small moieties such as a T-antigen.

The protein resides in the cell membrane. Functionally, receptor for a number of inflammatory CC-chemokines including CCL3/MIP-1-alpha, CCL4/MIP-1-beta and RANTES and subsequently transduces a signal by increasing the intracellular calcium ion level. May play a role in the control of granulocytic lineage proliferation or differentiation. Participates in T-lymphocyte migration to the infection site by acting as a chemotactic receptor. This chain is C-C chemokine receptor type 5 (CCR5), found in Cercocebus galeritus (Tana river mangabey).